The following is a 166-amino-acid chain: Phosphopantetheine adenylyltransferase (166 aa).

A substrate-binding site is contributed by S11. ATP-binding positions include 11-12 and H19; that span reads SF. Residues K43, A76, and R90 each coordinate substrate. Residues 91-93, E101, and 126-132 contribute to the ATP site; these read GLR and LQPISSS.

It belongs to the bacterial CoaD family. In terms of assembly, homohexamer. It depends on Mg(2+) as a cofactor.

It localises to the cytoplasm. It carries out the reaction (R)-4'-phosphopantetheine + ATP + H(+) = 3'-dephospho-CoA + diphosphate. Its pathway is cofactor biosynthesis; coenzyme A biosynthesis; CoA from (R)-pantothenate: step 4/5. In terms of biological role, reversibly transfers an adenylyl group from ATP to 4'-phosphopantetheine, yielding dephospho-CoA (dPCoA) and pyrophosphate. The chain is Phosphopantetheine adenylyltransferase from Streptococcus equi subsp. zooepidemicus (strain MGCS10565).